The primary structure comprises 180 residues: Ribosome rescue factor SmrB (180 aa).

The Smr domain occupies 98–173; that stretch reads LDLHGLTQLQ…GNAALLVLVA (76 aa).

It belongs to the SmrB family. As to quaternary structure, associates with collided ribosomes, but not with correctly translating polysomes.

Acts as a ribosome collision sensor. Detects stalled/collided disomes (pairs of ribosomes where the leading ribosome is stalled and a second ribosome has collided with it) and endonucleolytically cleaves mRNA at the 5' boundary of the stalled ribosome. Stalled/collided disomes form a new interface (primarily via the 30S subunits) that binds SmrB. Cleaved mRNA becomes available for tmRNA ligation, leading to ribosomal subunit dissociation and rescue of stalled ribosomes. This is Ribosome rescue factor SmrB from Pectobacterium atrosepticum (strain SCRI 1043 / ATCC BAA-672) (Erwinia carotovora subsp. atroseptica).